Consider the following 802-residue polypeptide: DSC E3 ubiquitin ligase complex subunit A (802 aa).

The first 22 residues, 1–22, serve as a signal peptide directing secretion; it reads MDNRGSFFFLLIVFYLLLSSQS. The Lumenal portion of the chain corresponds to 23–381; it reads RPPLLDQDRE…TGPKIEEYDK (359 aa). 6 N-linked (GlcNAc...) asparagine glycosylation sites follow: Asn48, Asn71, Asn115, Asn126, Asn148, and Asn166. A helical transmembrane segment spans residues 382 to 402; sequence YSARLVFIICGVFAAQITLLL. At 403–429 the chain is on the cytoplasmic side; it reads RQIKEASTPSTRSRISFYTIALMAFGD. Residues 430–450 traverse the membrane as a helical segment; sequence AFVLIFILLELYPAVSFLVMA. Over 451–453 the chain is Lumenal; the sequence is TAA. A helical transmembrane segment spans residues 454-474; that stretch reads FLTFLSVSYIGMKFMMEIWAV. At 475 to 550 the chain is on the cytoplasmic side; the sequence is QAPERREQER…QETRNDVGAM (76 aa). The segment at 478-541 is disordered; sequence ERREQERRSN…TNRGTTSAAQ (64 aa). Residues 532 to 541 show a composition bias toward polar residues; the sequence is TNRGTTSAAQ. A helical membrane pass occupies residues 551–571; the sequence is YARFYFVLFVMLIISIWSFLW. Residues 572-574 lie on the Lumenal side of the membrane; the sequence is PNR. The chain crosses the membrane as a helical span at residues 575 to 595; it reads LGALYARALAFVYLSFWTPQI. Topologically, residues 596-608 are cytoplasmic; sequence GRNIIRNCRKALR. The chain crosses the membrane as a helical span at residues 609–629; that stretch reads WDFVIGQSILRLFPFVYFLTV. Residues 630-642 are Lumenal-facing; that stretch reads RGNVLFIHPDTTT. The helical transmembrane segment at 643-663 threads the bilayer; that stretch reads AFALAGWVWIQVWVLASQDIL. Topologically, residues 664–802 are cytoplasmic; sequence GPRFFVPRGW…PICRESIPPV (139 aa). The RING-type; atypical zinc-finger motif lies at 732 to 796; it reads CAICMQEIEV…RLRLQCPICR (65 aa).

In terms of assembly, component of the DSC E3 ubiquitin ligase complex composed of dscA, dscB, dscC and dscD.

It localises to the endoplasmic reticulum membrane. It catalyses the reaction S-ubiquitinyl-[E2 ubiquitin-conjugating enzyme]-L-cysteine + [acceptor protein]-L-lysine = [E2 ubiquitin-conjugating enzyme]-L-cysteine + N(6)-ubiquitinyl-[acceptor protein]-L-lysine.. It participates in protein modification; protein ubiquitination. Functionally, catalytic component of the DSC E3 ubiquitin ligase complex which is required for the srbA transcriptional activator proteolytic cleavage to release the soluble transcription factor from the membrane in low oxygen or sterol conditions. Required for growth during hypoxia and triazole drug susceptibility, as well as for virulence in a murine model of invasive pulmonary aspergillosis (IPA). The protein is DSC E3 ubiquitin ligase complex subunit A of Aspergillus fumigatus (strain CBS 144.89 / FGSC A1163 / CEA10) (Neosartorya fumigata).